A 290-amino-acid polypeptide reads, in one-letter code: RWD domain-containing protein 2B (290 aa).

The 125-residue stretch at serine 12 to tyrosine 136 folds into the RWD domain.

The sequence is that of RWD domain-containing protein 2B (Rwdd2b) from Mus musculus (Mouse).